The primary structure comprises 342 residues: Probable dual-specificity RNA methyltransferase RlmN (342 aa).

Catalysis depends on Glu91, which acts as the Proton acceptor. A Radical SAM core domain is found at 97-327; the sequence is YKHGNSICVS…TTIRREMGAD (231 aa). Cys104 and Cys332 are disulfide-bonded. [4Fe-4S] cluster contacts are provided by Cys111, Cys115, and Cys118. S-adenosyl-L-methionine-binding positions include 158–159, Ser190, 213–215, and Asn289; these read GE and SLH. Cys332 acts as the S-methylcysteine intermediate in catalysis.

The protein belongs to the radical SAM superfamily. RlmN family. [4Fe-4S] cluster is required as a cofactor.

It localises to the cytoplasm. The catalysed reaction is adenosine(2503) in 23S rRNA + 2 reduced [2Fe-2S]-[ferredoxin] + 2 S-adenosyl-L-methionine = 2-methyladenosine(2503) in 23S rRNA + 5'-deoxyadenosine + L-methionine + 2 oxidized [2Fe-2S]-[ferredoxin] + S-adenosyl-L-homocysteine. It carries out the reaction adenosine(37) in tRNA + 2 reduced [2Fe-2S]-[ferredoxin] + 2 S-adenosyl-L-methionine = 2-methyladenosine(37) in tRNA + 5'-deoxyadenosine + L-methionine + 2 oxidized [2Fe-2S]-[ferredoxin] + S-adenosyl-L-homocysteine. In terms of biological role, specifically methylates position 2 of adenine 2503 in 23S rRNA and position 2 of adenine 37 in tRNAs. This is Probable dual-specificity RNA methyltransferase RlmN from Clostridium botulinum (strain ATCC 19397 / Type A).